A 208-amino-acid polypeptide reads, in one-letter code: N-(5'-phosphoribosyl)anthranilate isomerase (208 aa).

The protein belongs to the TrpF family.

The enzyme catalyses N-(5-phospho-beta-D-ribosyl)anthranilate = 1-(2-carboxyphenylamino)-1-deoxy-D-ribulose 5-phosphate. It participates in amino-acid biosynthesis; L-tryptophan biosynthesis; L-tryptophan from chorismate: step 3/5. This is N-(5'-phosphoribosyl)anthranilate isomerase from Methanococcus vannielii (strain ATCC 35089 / DSM 1224 / JCM 13029 / OCM 148 / SB).